Consider the following 195-residue polypeptide: ATP-dependent Clp protease proteolytic subunit (195 aa).

The active-site Nucleophile is the S98. H123 is a catalytic residue.

It belongs to the peptidase S14 family. In terms of assembly, fourteen ClpP subunits assemble into 2 heptameric rings which stack back to back to give a disk-like structure with a central cavity, resembling the structure of eukaryotic proteasomes.

The protein resides in the cytoplasm. The catalysed reaction is Hydrolysis of proteins to small peptides in the presence of ATP and magnesium. alpha-casein is the usual test substrate. In the absence of ATP, only oligopeptides shorter than five residues are hydrolyzed (such as succinyl-Leu-Tyr-|-NHMec, and Leu-Tyr-Leu-|-Tyr-Trp, in which cleavage of the -Tyr-|-Leu- and -Tyr-|-Trp bonds also occurs).. In terms of biological role, cleaves peptides in various proteins in a process that requires ATP hydrolysis. Has a chymotrypsin-like activity. Plays a major role in the degradation of misfolded proteins. The sequence is that of ATP-dependent Clp protease proteolytic subunit from Wolinella succinogenes (strain ATCC 29543 / DSM 1740 / CCUG 13145 / JCM 31913 / LMG 7466 / NCTC 11488 / FDC 602W) (Vibrio succinogenes).